We begin with the raw amino-acid sequence, 158 residues long: Phosphopantetheine adenylyltransferase (158 aa).

Thr-9 contributes to the substrate binding site. ATP is bound by residues 9-10 and His-17; that span reads TF. Substrate is bound by residues Lys-41, Leu-73, and Arg-87. Residues 88-90, Glu-98, and 123-129 each bind ATP; these read GVR and WSYVSST.

The protein belongs to the bacterial CoaD family. Homohexamer. It depends on Mg(2+) as a cofactor.

The protein localises to the cytoplasm. It catalyses the reaction (R)-4'-phosphopantetheine + ATP + H(+) = 3'-dephospho-CoA + diphosphate. Its pathway is cofactor biosynthesis; coenzyme A biosynthesis; CoA from (R)-pantothenate: step 4/5. Reversibly transfers an adenylyl group from ATP to 4'-phosphopantetheine, yielding dephospho-CoA (dPCoA) and pyrophosphate. This Histophilus somni (strain 2336) (Haemophilus somnus) protein is Phosphopantetheine adenylyltransferase.